The chain runs to 203 residues: MRTFIIKANKAHTKADFKLKDLPGTSGRIDLLCRVLNSAFLLSHGFRKNVRVWLSLYGPPNPPKAIRFEGQGMKPKTLNPDELSTAKLIIKALKVGENLREPSKEIQVLPGIYVSNLTFEDIIRRTLKGATLYYLHEEGRPIERVNFSQNVAFVLGDHEGLTPEDEAFLSGIAEKVSIGRKSYLASHVVAYVNIFLDSITPPP.

S-adenosyl-L-methionine-binding residues include L135 and G156.

This sequence belongs to the methyltransferase superfamily. TrmY family. Homodimer.

It is found in the cytoplasm. It catalyses the reaction pseudouridine(54) in tRNA + S-adenosyl-L-methionine = N(1)-methylpseudouridine(54) in tRNA + S-adenosyl-L-homocysteine + H(+). Functionally, specifically catalyzes the N1-methylation of pseudouridine at position 54 (Psi54) in tRNAs. The sequence is that of tRNA (pseudouridine(54)-N(1))-methyltransferase from Thermococcus onnurineus (strain NA1).